The primary structure comprises 256 residues: Glutamate racemase (256 aa).

Substrate-binding positions include 5–6 (DS) and 37–38 (YG). Cys-69 acts as the Proton donor/acceptor in catalysis. 70 to 71 (NT) is a substrate binding site. Cys-181 serves as the catalytic Proton donor/acceptor. A substrate-binding site is contributed by 182–183 (TH).

Belongs to the aspartate/glutamate racemases family.

The enzyme catalyses L-glutamate = D-glutamate. It functions in the pathway cell wall biogenesis; peptidoglycan biosynthesis. Its function is as follows. Provides the (R)-glutamate required for cell wall biosynthesis. The protein is Glutamate racemase of Buchnera aphidicola subsp. Schizaphis graminum (strain Sg).